The chain runs to 546 residues: Immunoglobulin-like domain-containing receptor 1 (546 aa).

The first 23 residues, 1–23 (MAWPKLPAPWLLLCTWLPAGCLS), serve as a signal peptide directing secretion. The Ig-like V-type domain maps to 24-162 (LLVTVQHTER…TSGDPDKEVK (139 aa)). At 24-167 (LLVTVQHTER…DKEVKLIVLH (144 aa)) the chain is on the extracellular side. An intrachain disulfide couples Cys-45 to Cys-145. A helical transmembrane segment spans residues 168 to 188 (WLTVIFIILGALLLLLLIGVC). At 189–546 (WCQCCPQYCC…SSHSGRSVVI (358 aa)) the chain is on the cytoplasmic side. The tract at residues 399 to 546 (WSGRHRSSRL…SSHSGRSVVI (148 aa)) is disordered. Residues 442 to 457 (RCQERPRRPSPRESTQ) are compositionally biased toward basic and acidic residues. Basic residues predominate over residues 458 to 467 (RHGRRRRHRS). A phosphoserine mark is found at Ser-499 and Ser-501. Residues 527 to 539 (GSVERRSEKDSSH) show a composition bias toward basic and acidic residues.

Belongs to the immunoglobulin superfamily. LISCH7 family. Homooligomer. Interacts with MARVELD2 and OCLN; the interaction is required to recruit MARVELD2 to tricellular contacts. Interacts (via C-terminus) with TRA2A, TRA2B and SRSF1. Interacts with PLSCR1.

The protein resides in the cell membrane. It is found in the cell junction. The protein localises to the tight junction. It localises to the nucleus. Its subcellular location is the cytoplasm. In terms of biological role, maintains epithelial barrier function by recruiting MARVELD2/tricellulin to tricellular tight junctions (tTJs). Crucial for normal hearing by maintaining the structural and functional integrity of tTJs, which are critical for the survival of auditory neurosensory HCs. Mediates fatty acids and lipoproteins-stimulated CCK/cholecystokinin secretion in the small intestine. In the inner ear, may regulate alternative pre-mRNA splicing via binding to TRA2A, TRA2B and SRSF1. The sequence is that of Immunoglobulin-like domain-containing receptor 1 (ILDR1) from Pongo abelii (Sumatran orangutan).